We begin with the raw amino-acid sequence, 444 residues long: ATP-dependent protease ATPase subunit HslU (444 aa).

ATP contacts are provided by residues Ile-18 and 60–65 (GVGKTE). Residues 141–161 (DAWGNNEEGNNDSGTRQSFRK) form a disordered region. Residues 147–157 (EEGNNDSGTRQ) are compositionally biased toward polar residues. Asp-257, Glu-322, and Arg-394 together coordinate ATP.

It belongs to the ClpX chaperone family. HslU subfamily. A double ring-shaped homohexamer of HslV is capped on each side by a ring-shaped HslU homohexamer. The assembly of the HslU/HslV complex is dependent on binding of ATP.

The protein resides in the cytoplasm. Functionally, ATPase subunit of a proteasome-like degradation complex; this subunit has chaperone activity. The binding of ATP and its subsequent hydrolysis by HslU are essential for unfolding of protein substrates subsequently hydrolyzed by HslV. HslU recognizes the N-terminal part of its protein substrates and unfolds these before they are guided to HslV for hydrolysis. The polypeptide is ATP-dependent protease ATPase subunit HslU (Aliivibrio fischeri (strain ATCC 700601 / ES114) (Vibrio fischeri)).